Here is a 335-residue protein sequence, read N- to C-terminus: GTPase Obg (335 aa).

An Obg domain is found at 1-158 (MFLDQITIEL…RQVELELKLI (158 aa)). The 176-residue stretch at 159-334 (ADIGLVGFPN…LNSLFTNKLA (176 aa)) folds into the OBG-type G domain. GTP is bound by residues 165–172 (GFPNAGKS), 190–194 (FTTLQ), 215–218 (DIPG), 285–288 (NKID), and 315–317 (SGL). Residues Ser-172 and Thr-192 each contribute to the Mg(2+) site.

Belongs to the TRAFAC class OBG-HflX-like GTPase superfamily. OBG GTPase family. In terms of assembly, monomer. Mg(2+) is required as a cofactor.

It localises to the cytoplasm. Functionally, an essential GTPase (4.1 pmol GTP/min). Cannot substitute endogenous obg in E.coli, has a partially dominant-negative phenotype upon overexpression in liquid culture leading to decreased growth rate in a concentration-dependent fashion, with 50% of cells being elongated. Binds GTP, GDP and possibly (p)ppGpp with moderate affinity, with high nucleotide exchange rates and a fairly low GTP hydrolysis rate. It may play a role in control of the cell cycle, stress response, ribosome biogenesis and in those bacteria that undergo differentiation, in morphogenesis control. This Chlamydia abortus (strain DSM 27085 / S26/3) (Chlamydophila abortus) protein is GTPase Obg.